A 106-amino-acid chain; its full sequence is Diptericin A (106 aa).

Positions 1–19 (MQFTIAVALLCCAIASTLA) are cleaved as a signal peptide. Positions 20–23 (YPMP) are cleaved as a propeptide — removed by a dipeptidylpeptidase.

The protein belongs to the attacin/sarcotoxin-2 family.

It localises to the secreted. Its function is as follows. Antimicrobial peptide required to resist Gram-negative bacterial infections, regulated by Dredd. The sequence is that of Diptericin A from Drosophila melanogaster (Fruit fly).